Here is a 455-residue protein sequence, read N- to C-terminus: Acetylcholinesterase collagenic tail peptide (455 aa).

The N-terminal stretch at 1–22 is a signal peptide; it reads MVVLNPMTLGIYLQLFFLSIVS. The interval 51–67 is PRAD; that stretch reads CCLLTPPPPPLFPPPFF. Residues 90–282 form a disordered region; that stretch reads QSPCMQGSLG…QLIMGPKGER (193 aa). 2 Collagen-like domains span residues 96–269 and 277–291; these read GSLG…PGPP and GPKG…PGRC. A compositionally biased stretch (pro residues) spans 101-112; sequence PGPPGPQGPPGL. Residues 118-127 show a composition bias toward basic and acidic residues; sequence PKGEKGELGR. The heparan sulfate proteoglycan binding stretch occupies residues 130–133; it reads RKGR. Residues 134–152 are compositionally biased toward pro residues; the sequence is PGPPGVPGMPGPIGWPGPE. Positions 182–200 are enriched in basic and acidic residues; the sequence is RGEKGSRGEKGDLGPKGEK. A heparan sulfate proteoglycan binding region spans residues 235 to 238; that stretch reads KRGK. The span at 262-271 shows a compositional bias: pro residues; it reads RPGPPGPPPA.

This sequence belongs to the COLQ family. As to quaternary structure, homotrimer. Component of the asymmetric form of AChE, a disulfide-bonded oligomer composed of the collagenic subunits (Q) and a variable number of asymmetric catalytic subunits (T). The N-terminal of a collagenic subunit (Q) associates with the C-terminal of a catalytic subunit (T). The triple-helical tail is stabilized by disulfide bonds at each end. Found at the end plate of skeletal muscle.

It localises to the synapse. Functionally, anchors the catalytic subunits of asymmetric AChE to the synaptic basal lamina. In Homo sapiens (Human), this protein is Acetylcholinesterase collagenic tail peptide (COLQ).